We begin with the raw amino-acid sequence, 214 residues long: Phosphatidylserine decarboxylase proenzyme (214 aa).

The active-site Schiff-base intermediate with substrate; via pyruvic acid is the serine 183. A Pyruvic acid (Ser); by autocatalysis modification is found at serine 183.

Belongs to the phosphatidylserine decarboxylase family. PSD-A subfamily. In terms of assembly, heterodimer of a large membrane-associated beta subunit and a small pyruvoyl-containing alpha subunit. Pyruvate serves as cofactor. Is synthesized initially as an inactive proenzyme. Formation of the active enzyme involves a self-maturation process in which the active site pyruvoyl group is generated from an internal serine residue via an autocatalytic post-translational modification. Two non-identical subunits are generated from the proenzyme in this reaction, and the pyruvate is formed at the N-terminus of the alpha chain, which is derived from the carboxyl end of the proenzyme. The post-translation cleavage follows an unusual pathway, termed non-hydrolytic serinolysis, in which the side chain hydroxyl group of the serine supplies its oxygen atom to form the C-terminus of the beta chain, while the remainder of the serine residue undergoes an oxidative deamination to produce ammonia and the pyruvoyl prosthetic group on the alpha chain.

It is found in the cell membrane. It carries out the reaction a 1,2-diacyl-sn-glycero-3-phospho-L-serine + H(+) = a 1,2-diacyl-sn-glycero-3-phosphoethanolamine + CO2. It participates in phospholipid metabolism; phosphatidylethanolamine biosynthesis; phosphatidylethanolamine from CDP-diacylglycerol: step 2/2. Catalyzes the formation of phosphatidylethanolamine (PtdEtn) from phosphatidylserine (PtdSer). This is Phosphatidylserine decarboxylase proenzyme from Syntrophotalea carbinolica (strain DSM 2380 / NBRC 103641 / GraBd1) (Pelobacter carbinolicus).